The sequence spans 296 residues: 4-hydroxy-tetrahydrodipicolinate synthase (296 aa).

A pyruvate-binding site is contributed by threonine 49. Tyrosine 137 acts as the Proton donor/acceptor in catalysis. The active-site Schiff-base intermediate with substrate is lysine 166. Isoleucine 208 lines the pyruvate pocket.

Belongs to the DapA family. Homotetramer; dimer of dimers.

Its subcellular location is the cytoplasm. The catalysed reaction is L-aspartate 4-semialdehyde + pyruvate = (2S,4S)-4-hydroxy-2,3,4,5-tetrahydrodipicolinate + H2O + H(+). The protein operates within amino-acid biosynthesis; L-lysine biosynthesis via DAP pathway; (S)-tetrahydrodipicolinate from L-aspartate: step 3/4. In terms of biological role, catalyzes the condensation of (S)-aspartate-beta-semialdehyde [(S)-ASA] and pyruvate to 4-hydroxy-tetrahydrodipicolinate (HTPA). In Chlorobium limicola (strain DSM 245 / NBRC 103803 / 6330), this protein is 4-hydroxy-tetrahydrodipicolinate synthase.